The chain runs to 897 residues: Zinc finger protein zas1 (897 aa).

C2H2-type zinc fingers lie at residues 26-50 and 56-79; these read FYCT…ERTH and FSCS…QQMH. The segment at 93–119 adopts a C2H2-type 3; atypical zinc-finger fold; it reads ASCFLGFCVLAHDYVNLINARHFMIEH.

It localises to the nucleus. This is Zinc finger protein zas1 (zas1) from Schizosaccharomyces pombe (strain 972 / ATCC 24843) (Fission yeast).